We begin with the raw amino-acid sequence, 305 residues long: Homoserine kinase (305 aa).

Position 90-100 (90-100 (PLARGLGSSAS)) interacts with ATP.

Belongs to the GHMP kinase family. Homoserine kinase subfamily.

The protein localises to the cytoplasm. It carries out the reaction L-homoserine + ATP = O-phospho-L-homoserine + ADP + H(+). The protein operates within amino-acid biosynthesis; L-threonine biosynthesis; L-threonine from L-aspartate: step 4/5. Catalyzes the ATP-dependent phosphorylation of L-homoserine to L-homoserine phosphate. This Staphylococcus haemolyticus (strain JCSC1435) protein is Homoserine kinase.